A 240-amino-acid polypeptide reads, in one-letter code: Transcription factor bHLH47 (240 aa).

The segment covering 1–13 (MVSKTPSTSSDEA) has biased composition (polar residues). Positions 1-26 (MVSKTPSTSSDEANATADERCRKGKV) are disordered. The bHLH domain occupies 27–77 (PKRINKAVRERLKREHLNELFIELADTLELNQQNSGKASILCEATRFLKDV). Positions 98–131 (VTTEKNELKEETSVLETEISKLQNEIEARANQSK) form a coiled coil. A compositionally biased stretch (polar residues) spans 128–138 (NQSKPDLNTSP). Residues 128–153 (NQSKPDLNTSPAPEYHHHHYQQQHPE) are disordered.

Homodimer. Forms heterodimer with PYEL proteins bHLH115, bHLH104 and ILR3. Expressed constitutively in roots, leaves, stems, and flowers.

The protein resides in the nucleus. This Arabidopsis thaliana (Mouse-ear cress) protein is Transcription factor bHLH47 (BHLH47).